Here is a 578-residue protein sequence, read N- to C-terminus: tRNA (guanine(26)-N(2))-dimethyltransferase (578 aa).

The region spanning 18-451 (NVIRERNAEI…APPAVLWDIL (434 aa)) is the Trm1 methyltransferase domain. Residue Arg43 coordinates S-adenosyl-L-methionine. The tract at residues 63–92 (EKALKKQRKKVKEQEDEKTTPVPEDPPVYE) is disordered. S-adenosyl-L-methionine-binding residues include Arg113 and Asp131. Residues Cys295, Cys298, Cys335, and Cys338 each coordinate Zn(2+). Residues 491–578 (EANPKSRKSA…PKQPKLEATA (88 aa)) form a disordered region. Basic and acidic residues predominate over residues 564–578 (DVEHLPKQPKLEATA).

The protein belongs to the class I-like SAM-binding methyltransferase superfamily. Trm1 family.

The catalysed reaction is guanosine(26) in tRNA + 2 S-adenosyl-L-methionine = N(2)-dimethylguanosine(26) in tRNA + 2 S-adenosyl-L-homocysteine + 2 H(+). Dimethylates a single guanine residue at position 26 of most tRNAs using S-adenosyl-L-methionine as donor of the methyl groups. The protein is tRNA (guanine(26)-N(2))-dimethyltransferase of Drosophila melanogaster (Fruit fly).